The sequence spans 396 residues: Argininosuccinate synthase (396 aa).

9 to 17 is an ATP binding site; sequence AYSGGLDTS. Residue tyrosine 85 coordinates L-citrulline. ATP is bound at residue glycine 115. 3 residues coordinate L-aspartate: threonine 117, asparagine 121, and aspartate 122. Asparagine 121 is an L-citrulline binding site. Residues arginine 125, serine 173, glutamate 258, and tyrosine 270 each coordinate L-citrulline.

Belongs to the argininosuccinate synthase family. Type 1 subfamily. Homotetramer.

It localises to the cytoplasm. It carries out the reaction L-citrulline + L-aspartate + ATP = 2-(N(omega)-L-arginino)succinate + AMP + diphosphate + H(+). It functions in the pathway amino-acid biosynthesis; L-arginine biosynthesis; L-arginine from L-ornithine and carbamoyl phosphate: step 2/3. This is Argininosuccinate synthase from Streptococcus agalactiae serotype V (strain ATCC BAA-611 / 2603 V/R).